The following is a 501-amino-acid chain: MNSESLENLHRPLIESSKSFVDYRLETVLTDRELPYFRRIYLAMMIEMKFLFHLAAPAIFVYVINNGMSILTRIFAGHVGSFELAAASLGNSGFNMFTYGLLLGMGSAVETLCGQAHGAHRYEMLGVYLQRSTVVLILTCLPMSFLFLFSNPILTALGEPEQVATLASVFVYGMIPVIFAYAVNFPIQKFLQSQSIVTPSAYISAATLVIHLILSWIAVYRLGYGLLALSLIHSFSWWIIVVAQIVYIKMSPRCRRTWEGFSWKAFEGLWDFFRLSAASAVMLCLESWYSQILVLLAGLLKNPELALDSLAICMSISAISFMVSVGFNAAASVRVSNELGAGNPRAAAFSTVVTTGVSFLLSVFEAIVVLSWRHVISYAFTDSPAVAEAVADLSPFLAITIVLNGIQPVLSGVAVGCGWQAFVAYVNIGCYYVVGIPVGFVLGFTYDMGAKGIWTGMIGGTLMQTIILVIVTLRTDWDKEVEKASSRLDQWEESREPLLKQ.

Helical transmembrane passes span 44-64 (MMIEMKFLFHLAAPAIFVYVI), 84-104 (LAAASLGNSGFNMFTYGLLLG), 134-154 (VVLILTCLPMSFLFLFSNPIL), 163-183 (VATLASVFVYGMIPVIFAYAV), 200-220 (SAYISAATLVIHLILSWIAVY), 222-242 (LGYGLLALSLIHSFSWWIIVV), 280-300 (AVMLCLESWYSQILVLLAGLL), 310-330 (LAICMSISAISFMVSVGFNAA), 352-372 (VVTTGVSFLLSVFEAIVVLSW), 396-416 (FLAITIVLNGIQPVLSGVAVG), 422-442 (FVAYVNIGCYYVVGIPVGFVL), and 453-473 (IWTGMIGGTLMQTIILVIVTL).

This sequence belongs to the multi antimicrobial extrusion (MATE) (TC 2.A.66.1) family.

It is found in the membrane. This Arabidopsis thaliana (Mouse-ear cress) protein is Protein DETOXIFICATION 37.